A 138-amino-acid chain; its full sequence is MLQPARRKYRKEQKGRNTGIATRGNSVAFGDFGLKSTDRGRLTARQIEAARRAISRHVKRGGRIWIRVFPDKPISTKPAEVRMGNGKGNPEYYVAEIQPGKVLYEIVGVPEELAREAFRLAAAKLPLRTTFVSRQIGA.

Over residues 1-13 (MLQPARRKYRKEQ) the composition is skewed to basic residues. A disordered region spans residues 1-22 (MLQPARRKYRKEQKGRNTGIAT).

It belongs to the universal ribosomal protein uL16 family. As to quaternary structure, part of the 50S ribosomal subunit.

Functionally, binds 23S rRNA and is also seen to make contacts with the A and possibly P site tRNAs. This Delftia acidovorans (strain DSM 14801 / SPH-1) protein is Large ribosomal subunit protein uL16.